Reading from the N-terminus, the 289-residue chain is Oxygen-dependent coproporphyrinogen-III oxidase (289 aa).

S82 is a substrate binding site. The a divalent metal cation site is built by H86 and H96. Residue H96 is the Proton donor of the active site. 98–100 (NYR) serves as a coordination point for substrate. 2 residues coordinate a divalent metal cation: H130 and H160. The segment at 224 to 259 (YVEFNLVWDRGTIFGLQTNGRIESILMSMPPLVRWE) is important for dimerization.

This sequence belongs to the aerobic coproporphyrinogen-III oxidase family. As to quaternary structure, homodimer. Requires a divalent metal cation as cofactor.

It is found in the cytoplasm. It carries out the reaction coproporphyrinogen III + O2 + 2 H(+) = protoporphyrinogen IX + 2 CO2 + 2 H2O. It participates in porphyrin-containing compound metabolism; protoporphyrin-IX biosynthesis; protoporphyrinogen-IX from coproporphyrinogen-III (O2 route): step 1/1. In terms of biological role, involved in the heme and chlorophyll biosynthesis. Catalyzes the aerobic oxidative decarboxylation of propionate groups of rings A and B of coproporphyrinogen-III to yield the vinyl groups in protoporphyrinogen-IX. This chain is Oxygen-dependent coproporphyrinogen-III oxidase, found in Gloeobacter violaceus (strain ATCC 29082 / PCC 7421).